Here is a 540-residue protein sequence, read N- to C-terminus: Exopolysaccharide phosphotransferase SCO6022 (540 aa).

It belongs to the stealth family.

This Streptomyces coelicolor (strain ATCC BAA-471 / A3(2) / M145) protein is Exopolysaccharide phosphotransferase SCO6022.